A 179-amino-acid chain; its full sequence is Small ribosomal subunit protein eS10x (179 aa).

The disordered stretch occupies residues 90–179 (TLKKSAKPGG…AAAPSGSGLP (90 aa)). Positions 108–129 (DRSRGPRHEGGDRPRFGDRDGY) are enriched in basic and acidic residues. Over residues 134–144 (RAGGEFGGEKG) the composition is skewed to gly residues. A compositionally biased stretch (low complexity) spans 145–156 (GAPADYQPSFQG). Over residues 157–167 (SGRGFGRGAGG) the composition is skewed to gly residues. Residues 168-179 (YSAAAPSGSGLP) are compositionally biased toward low complexity.

Belongs to the eukaryotic ribosomal protein eS10 family.

It is found in the cytoplasm. This chain is Small ribosomal subunit protein eS10x (RPS10C), found in Arabidopsis thaliana (Mouse-ear cress).